A 509-amino-acid polypeptide reads, in one-letter code: Metal transporter Nramp3 (509 aa).

A compositionally biased stretch (low complexity) spans 1 to 12; the sequence is MPQLENNEPLLI. Positions 1-25 are disordered; sequence MPQLENNEPLLINEEEEEETAYDET. A compositionally biased stretch (acidic residues) spans 13–23; sequence NEEEEEETAYD. The next 12 helical transmembrane spans lie at 56 to 76, 84 to 104, 133 to 153, 165 to 185, 193 to 213, 239 to 259, 285 to 305, 327 to 347, 383 to 403, 406 to 426, 444 to 464, and 472 to 492; these read LWLF…PGNL, AVAG…GLLV, MVLW…EVIG, ILPL…FLFL, LEAV…WMFG, AVGV…SALV, IALF…AKGF, YGGG…AAGQ, IIPT…LDVL, WLNV…LCLV, IAWL…LEFF, and VYTG…LYLI.

This sequence belongs to the NRAMP (TC 2.A.55) family. Expressed in vascular tissues.

It localises to the vacuole membrane. In terms of biological role, vacuolar metal transporter involved in intracellular metal homeostasis. Can transport iron (Fe), manganese (Mn) and cadmium (Cd). Regulates metal accumulation under Fe starvation. Acts redundantly with NRAMP4 to mobilize vacuolar Fe and provide sufficient Fe during seed germination. In association with NRAMP4, required for optimal growth and photosynthesis under Mn deficiency. Exports Mn from vacuoles in leaf mesophyll cells, making Mn available for functional photosystem II in chloroplasts. Involved in basal resistance to the bacterial pathogen E.chrysanthemi. The polypeptide is Metal transporter Nramp3 (NRAMP3) (Arabidopsis thaliana (Mouse-ear cress)).